An 88-amino-acid chain; its full sequence is MPNIKSAIKRTKTNNERRAHNATIKSAMRTAMKQVETFVSNNEADKAKAALSAAAKKIDKAAKKGLVHKNTAARYKSNLAKKVNGLSA.

Belongs to the bacterial ribosomal protein bS20 family.

Binds directly to 16S ribosomal RNA. The polypeptide is Small ribosomal subunit protein bS20 (Bacillus licheniformis (strain ATCC 14580 / DSM 13 / JCM 2505 / CCUG 7422 / NBRC 12200 / NCIMB 9375 / NCTC 10341 / NRRL NRS-1264 / Gibson 46)).